Reading from the N-terminus, the 295-residue chain is UTP--glucose-1-phosphate uridylyltransferase (295 aa).

The protein belongs to the UDPGP type 2 family.

The enzyme catalyses alpha-D-glucose 1-phosphate + UTP + H(+) = UDP-alpha-D-glucose + diphosphate. Functionally, may play a role in stationary phase survival. In Haemophilus influenzae (strain ATCC 51907 / DSM 11121 / KW20 / Rd), this protein is UTP--glucose-1-phosphate uridylyltransferase (galU).